A 187-amino-acid chain; its full sequence is Elongation factor P (187 aa).

This sequence belongs to the elongation factor P family.

It is found in the cytoplasm. The protein operates within protein biosynthesis; polypeptide chain elongation. Involved in peptide bond synthesis. Stimulates efficient translation and peptide-bond synthesis on native or reconstituted 70S ribosomes in vitro. Probably functions indirectly by altering the affinity of the ribosome for aminoacyl-tRNA, thus increasing their reactivity as acceptors for peptidyl transferase. The protein is Elongation factor P of Corynebacterium kroppenstedtii (strain DSM 44385 / JCM 11950 / CIP 105744 / CCUG 35717).